The following is a 164-amino-acid chain: Large ribosomal subunit protein uL11 (164 aa).

This sequence belongs to the universal ribosomal protein uL11 family. As to quaternary structure, part of the ribosomal stalk of the 50S ribosomal subunit. Interacts with L10 and the large rRNA to form the base of the stalk. L10 forms an elongated spine to which L12 dimers bind in a sequential fashion forming a multimeric L10(L12)X complex.

Functionally, forms part of the ribosomal stalk which helps the ribosome interact with GTP-bound translation factors. This Pyrococcus abyssi (strain GE5 / Orsay) protein is Large ribosomal subunit protein uL11.